The following is an 83-amino-acid chain: UPF0248 protein PH1212.1 (83 aa).

Belongs to the UPF0248 family.

The protein is UPF0248 protein PH1212.1 of Pyrococcus horikoshii (strain ATCC 700860 / DSM 12428 / JCM 9974 / NBRC 100139 / OT-3).